A 1190-amino-acid chain; its full sequence is Tight junction protein 2 (1190 aa).

Phosphoserine is present on S16. Residues 33–120 (TVTLQKDSKR…VAAIVVKRPR (88 aa)) enclose the PDZ 1 domain. A phosphoserine mark is found at S130, S150, S153, S163, S168, S170, S174, S200, S220, S232, S244, S266, S325, S398, S400, S406, S415, S424, S430, and S431. Residues 152 to 306 (RSGYSERSRL…PEPRGRPGPI (155 aa)) are disordered. Residues 169–291 (RSWEDSPERG…PRSRSREHPH (123 aa)) show a composition bias toward basic and acidic residues. Residues 307–385 (GVLLMKSRAN…KLQLVVLRDS (79 aa)) form the PDZ 2 domain. The tract at residues 408–506 (IESNRSFSPE…RPSPEDEAIY (99 aa)) is disordered. Positions 415 to 446 (SPEERRHQYSDYDYHSSSEKLKERPSSREDTP) are enriched in basic and acidic residues. T455 carries the phosphothreonine modification. At S499 the chain carries Phosphoserine. Positions 509 to 590 (NTKMVRFKKG…GEMVTILAQS (82 aa)) constitute a PDZ 3 domain. Phosphotyrosine is present on Y574. The SH3 domain occupies 604 to 669 (GDSFFIRSHF…PNKSRAEQMA (66 aa)). The Guanylate kinase-like domain occupies 678 to 876 (NAGDRADFWR…WFGSLKDTIQ (199 aa)). Residues S702 and S902 each carry the phosphoserine modification. Residue T905 is modified to Phosphothreonine. 2 positions are modified to phosphoserine: S913 and S920. Disordered regions lie at residues 920–1079 (SDFE…KSVL) and 1105–1190 (NARI…DTEL). Phosphothreonine occurs at positions 925 and 933. Over residues 956–967 (VQHEESIRKPSP) the composition is skewed to basic and acidic residues. A phosphoserine mark is found at S966, S978, S986, S1006, S1067, and S1068. Basic and acidic residues predominate over residues 994 to 1014 (EPPKAKTQNKEESYDFSKSYE). Residues 1060-1072 (EGEEVGESSEEQD) show a composition bias toward acidic residues. Phosphotyrosine is present on Y1118. Residue T1131 is modified to Phosphothreonine. A phosphoserine mark is found at S1147 and S1159. A compositionally biased stretch (basic and acidic residues) spans 1166–1175 (YRQQLSEHSK). The interaction with SCRIB stretch occupies residues 1188 to 1190 (TEL).

It belongs to the MAGUK family. As to quaternary structure, homodimer. Interacts (via PDZ2 domain) with TJP1/ZO1 (via PDZ2 domain). Interacts with OCLN. Interacts with UBN1. Interacts with SAFB in the nucleus. Interacts with SCRIB. Interacts with USP53 (via the C-terminal region). Interacts with claudins, including CLDN1, CLDN2, CLDN3, CLDN5 and CLDN7. Interacts with CLDN18. Interacts (via N-terminus) with CTNNA1. In terms of tissue distribution, this protein is found in epithelial cell junctions. Isoform A1 is abundant in the heart and brain. Detected in brain and skeletal muscle. It is present almost exclusively in normal tissues. Isoform C1 is expressed at high level in the kidney, pancreas, heart and placenta. Not detected in brain and skeletal muscle. Found in normal as well as in most neoplastic tissues.

Its subcellular location is the cell junction. It localises to the adherens junction. It is found in the cell membrane. The protein localises to the tight junction. The protein resides in the nucleus. Plays a role in tight junctions and adherens junctions. Acts as a positive regulator of RANKL-induced osteoclast differentiation, potentially via mediating downstream transcriptional activity. The polypeptide is Tight junction protein 2 (Homo sapiens (Human)).